We begin with the raw amino-acid sequence, 51 residues long: Ovomucoid (51 aa).

The 49-residue stretch at 3–51 (VDCSGYPKPDCTLESFPLCGSDNQTYSNKCAFCNAAVERNVTLRHLGEC) folds into the Kazal-like domain. 3 cysteine pairs are disulfide-bonded: Cys-5-Cys-35, Cys-13-Cys-32, and Cys-21-Cys-51. Asn-42 carries N-linked (GlcNAc...) asparagine glycosylation.

Its subcellular location is the secreted. The protein is Ovomucoid of Rhynchotus rufescens (Red-winged tinamou).